Reading from the N-terminus, the 253-residue chain is MARMGGQRRLKALAAPRFWPILRKEYKWAVKPRPGPHPAEKSLPLLLIVRNVLGYAQTAREARKLISEGHFRVDGVVRKDYKFPVGFMDVIEVVDTGEKFRMLPYPVKFFKLHPIPEEEGDLKPVRIENKTTVKGGHVQLNLHDGRNILVRVKDPRNPVEDVYRTMDTLLITVPGQEIKGHIKFGEGAIAIIVGGRNVGRVGVVKSVQKGWGRKRTLVTLEDASGNLFQTSLDYVFVIGLDRPVISLPEGAWK.

The S4 RNA-binding domain maps to 43–114 (LPLLLIVRNV…YPVKFFKLHP (72 aa)).

Belongs to the eukaryotic ribosomal protein eS4 family.

This chain is Small ribosomal subunit protein eS4 (rps4e), found in Aeropyrum pernix (strain ATCC 700893 / DSM 11879 / JCM 9820 / NBRC 100138 / K1).